A 2309-amino-acid polypeptide reads, in one-letter code: MGTWKTFWLIISLAAGLGFVKSQRIVCREASVGDIVFLVHNSINPQHAHSVRNFLYILANSLQVGRDNIRVGLAQYSDTPTSEFLLSVYHRKGDVLKHIRGLQFKPGGNRMGQALQFILEHHFREGAGSRASQGVPQVAVVVSSGLTEDHIREPAEALRRAGILVYAIGVKDASQAELREISSSPKDNFTFFVPNFPGLPGLAQKLRPELCSTLGKAAQYTERESPACSEASPADIVFLVDSSTSIGLQNFQKVKHFLHSVVSGLDVRSDQVQVGLVQYSDNIYPAFPLKQSSLKSAVLDRIRNLPYSMGGTSTGSALEFIRANSLTEMSGSRAKDGVPQIVVLVTDGESSDEVQDVADQLKRDGVFVFVVGINIQDVQELQKIANEPFEEFLFTTENFSILQALSGTLLQALCSTVERQMKKSTKTYADVVFLIDTSQGTSQASFQWMQNFISRIIGILEVGQDKYQIGLAQYSDQGHTEFLFNTHKTRNEMVAHIHELLVFQGGSRKTGQGLRFLHRTFFQEAAGSRLLQGVPQYVVVITSGKSEDEVGEVAQILRKRGVDIVSVGLQDFDRAELEGIGPVVLVSDLQGEDRIRQLMLDVNMFIQGSPKPPRVMTDVAKDAVEECLVPVPADLVFLVEDFSSARQPNFQRVVHFLTTTVHSLNIHPDTTRVSLVFYSEKPRLEFSLDMYQSAAQVLRHLDRLTFRARRGRAKAGAALDFLRKEVFLPEKGSRPHRGVQQIAVVIIESPSLDNVSTPASYLRRAGVTIYAAGTQPASESKDLEKIVTYPPWKHAIRLESFLQLSVVGNKLKKKLCPEMLSGMPPLMSFIPESTRQSTQEGCESVEKADIYFLIDGSGSIKPNDFIEMKDFMKEVIKMFHIGPDRVRFGVVQYSDKIISQFFLTQYASMAGLSAAIDNIQQVGGGTTTGKALSKMVPVFQNTARIDVARYLIVITDGQSTDPVAEAAQGLRDIGVNIYAIGVRDANTTELEEIASKKMFFIYEFDSLKSIHQEVIRDICSSENCKSQKADIIFLIDGSESIAPKDFEKMKDFMERMVNQSNIGADEIQIGLLQFSSNPQEEFRLNRYSSKVDMCRAILSVQQMSDGTHTGKALNFTLPFFDSSRGGRPRVHQYLIVITDGVSQDNVAPPAKALRDRNIIIFAIGVGNVQRAQLLEITNDQDKVFQEENFESLQSLEKEILSEVCSSQGCNIDLSVGVDTSTSSERAQQELRRLLPELMQQLAFLSNISCEAPGQMEPRFRYVVPGSSDQPVFDSGFEKYSDETIQKFLVHQGSVNNRMDVDFLQSLGETAIHLSLAKVKVLLVFTDGLDEDLERLRRTSEFLRSRGLSGLLLIGLGGAHKLEELQELEFGRGFAYRQPLSSSLPSLPSVLLKQLDTIVERTCCNMYAKCYGDDGIRGEPGSRGEQGERGLDGLPGHPGEEGDHGQRGPRGLPGLRGEEGCPGVRGPKGARGFSGEKGNPGEEGVGGLDGEQGDRGAAGPSGEKGSSGSRGLTGLPGPAGPRGEPGLRGDPGDPGIDNLIQGPKGEKGRRGHQGSPGFHGPLGEAGSVGPRGSLGRHGLPGLKGVLGETGELGSRGEPGHPGPQGPRGRQGPPGFFGQKGDPGTQGNPGLPGPSGSKGPDGPRGLKGEVGPAGERGPRGQQGPRGQPGLFGPDGHGYPGRKGRKGEPGFPGYPGVQGEDGNPGRGGEKGAKGIRGKRGNSGFPGLAGTPGDQGPPGKMGTKGSKGLADRTPCEIVDFVRGNCPCSTGISRCPAFPTEVVFTLDMSNDVAPSDFERMRNILLSLLMKLEMCESNCPTGARVAIVSYNTRTDYLVRLSDHRGKAALLQAVRKIPLERSSGSRNLGATMRFVARHVFKRVRSGLLVRKVAVFFQAGRNYDTASVSTATLELHAADIATAVVTFTEEHNLPEAGLVDGPNEFHLFTWETEGQQDVERLASCTLCYDKCRPALGCQLRAPGPQKLDMDLVFLVDSSQGVSRDIYLGALRLVDSVLKDLEVAAQPGTSWHGARAALLTHTTPGFWPGVDQAPVLEYFHLTSHGHRTEMQRQIREAASGLLQGGPALGHALEWTLENVLLTAVLPRRSRVLYAIVASETSIWDREKLRTLSQEAKCKGIALFVLAVGPGVGAQELAELAKVASAPWEQHLLRLEGVSEAEVAYASRFTEAFLNLLNSGINQYPPPELVKECGGPNRGDTLLHFFTSAKRFSRSQSGTSAAFANDSEALKSQGIFLGERKSRVASVALQEALGSHGKDRADTEDIDQETPAKGRHLGPTHGPCPMGPEEGECLNYVLK.

The first 22 residues, 1–22 (MGTWKTFWLIISLAAGLGFVKS), serve as a signal peptide directing secretion. The segment at 21-1410 (KSQRIVCREA…TCCNMYAKCY (1390 aa)) is nonhelical region. VWFA domains follow at residues 34–206 (DIVF…AQKL), 235–413 (DIVF…LQAL), 430–653 (DVVF…FQRV), 634–811 (DLVF…GNKL), 849–1018 (DIYF…IRDI), and 1030–1199 (DIIF…EKEI). An N-linked (GlcNAc...) asparagine glycan is attached at Asn-188. A glycan (N-linked (GlcNAc...) asparagine) is linked at Asn-754. The N-linked (GlcNAc...) asparagine glycan is linked to Asn-1114. A triple-helical region region spans residues 1411-1744 (GDDGIRGEPG…GKMGTKGSKG (334 aa)). Positions 1414 to 1430 (GIRGEPGSRGEQGERGL) are enriched in basic and acidic residues. Residues 1414-1746 (GIRGEPGSRG…MGTKGSKGLA (333 aa)) are disordered. Residues 1480 to 1489 (GEEGVGGLDG) are compositionally biased toward gly residues. The short motif at 1527-1529 (RGD) is the Cell attachment site element. Low complexity-rich tracts occupy residues 1605-1621 (PRGR…KGDP) and 1650-1669 (PAGE…PGLF). Positions 1745–2309 (LADRTPCEIV…EGECLNYVLK (565 aa)) are nonhelical region. 2 consecutive VWFA domains span residues 1776–1957 (EVVF…ASCT) and 1982–2187 (DLVF…LNLL). The Cell attachment site signature appears at 2208-2210 (RGD). Residues 2262-2300 (ALGSHGKDRADTEDIDQETPAKGRHLGPTHGPCPMGPEE) form a disordered region.

The protein belongs to the type VI collagen family. Trimers composed of three different chains: alpha-1(VI), alpha-2(VI), and alpha-3(VI) or alpha-4(VI) or alpha-5(VI) or alpha-6(VI). Post-translationally, prolines at the third position of the tripeptide repeating unit (G-X-Y) are hydroxylated in some or all of the chains. In terms of tissue distribution, in newborn, it is expressed in lung, kidney, brain, intestine, skin, sternum and, at weak level, calvaria. In adult, it is almost absent with some weak expression in ovary and very weak expression in spleen, lung, uterus and brain.

It is found in the secreted. The protein resides in the extracellular space. Its subcellular location is the extracellular matrix. Functionally, collagen VI acts as a cell-binding protein. The polypeptide is Collagen alpha-4(VI) chain (Col6a4) (Mus musculus (Mouse)).